A 152-amino-acid chain; its full sequence is MAAERSFIAIKPDGVQRGLVGEILGRFERKGFKLVGLKQLTPSRELAEQHYGVHKERPFFGGLVDFITSGPVVAMVWEGDGVITSARKMIGATKPLEAEPGTIRGDLAINIGRNVIHGSDAPETAEFEIGLWFNPSELSDWTPSDQTWRVEG.

Lysine 11, phenylalanine 59, arginine 87, threonine 93, arginine 104, and asparagine 114 together coordinate ATP. Histidine 117 functions as the Pros-phosphohistidine intermediate in the catalytic mechanism.

The protein belongs to the NDK family. As to quaternary structure, homotetramer. Mg(2+) serves as cofactor.

It is found in the cytoplasm. The catalysed reaction is dZDP + ATP = dZTP + ADP. It carries out the reaction a 2'-deoxyribonucleoside 5'-diphosphate + ATP = a 2'-deoxyribonucleoside 5'-triphosphate + ADP. It catalyses the reaction a ribonucleoside 5'-diphosphate + ATP = a ribonucleoside 5'-triphosphate + ADP. The protein operates within purine metabolism. Major role in the synthesis of nucleoside triphosphates other than ATP. The ATP gamma phosphate is transferred to the NDP beta phosphate via a ping-pong mechanism, using a phosphorylated active-site intermediate. In terms of biological role, (Microbial infection) Catalyzes the phosphorylation of dZDP to dZTP, when the bacterium is infected by a phage that produces the substrate for the synthesis of dZTP (2- amino-2'-deoxyadenosine 5'-triphosphate), which is then used by the phage as a DNA polymerase substrate. This Synechococcus sp. (strain CC9311) protein is Nucleoside diphosphate kinase.